The chain runs to 237 residues: Uridylate kinase (237 aa).

Position 10 to 13 (10 to 13) interacts with ATP; the sequence is KFSG. The segment at 18 to 23 is involved in allosteric activation by GTP; that stretch reads GDSGFG. Glycine 52 contacts UMP. Residues glycine 53 and arginine 57 each contribute to the ATP site. UMP is bound by residues aspartate 73 and 134-141; that span reads TGNPFFTT. Residues threonine 161, tyrosine 167, and aspartate 170 each coordinate ATP.

The protein belongs to the UMP kinase family. In terms of assembly, homohexamer.

Its subcellular location is the cytoplasm. The catalysed reaction is UMP + ATP = UDP + ADP. The protein operates within pyrimidine metabolism; CTP biosynthesis via de novo pathway; UDP from UMP (UMPK route): step 1/1. With respect to regulation, allosterically activated by GTP. Inhibited by UTP. Catalyzes the reversible phosphorylation of UMP to UDP. The chain is Uridylate kinase from Campylobacter hominis (strain ATCC BAA-381 / DSM 21671 / CCUG 45161 / LMG 19568 / NCTC 13146 / CH001A).